We begin with the raw amino-acid sequence, 340 residues long: Deubiquitinase SseL (340 aa).

His-223 is a catalytic residue. Catalysis depends on Cys-285, which acts as the Nucleophile.

The protein belongs to the peptidase C79 family.

It localises to the secreted. The protein resides in the host cytoplasm. Effector proteins function to alter host cell physiology and promote bacterial survival in host tissues. This protease targets the host cell ubiquitin pathway by acting as a deubiquitinase in infected host cells. Specifically hydrolyzes mono- and polyubiquitin substrates in vitro with a preference for 'Lys-63'-linked ubiquitin chains, suggesting that it interferes with a signaling pathway rather than inhibiting proteasomal-dependent degradation of its targets. Does not possess desumoylating activity. Is required for the Salmonella-induced delayed cytotoxicity in macrophages and full virulence. Is not required for intracellular bacterial replication. This chain is Deubiquitinase SseL (sseL), found in Salmonella typhimurium (strain LT2 / SGSC1412 / ATCC 700720).